Consider the following 558-residue polypeptide: Membrane protein insertase YidC (558 aa).

5 consecutive transmembrane segments (helical) span residues 3–23, 364–384, 438–458, 477–497, and 508–528; these read IKRTVLWVIFFMSAVMLFDNW, FVGNWGWAIVLLTLLIKAVFF, LPVVIQIPVFISLYWVLLASV, PYFILPVLMAVSMFVQTKLNP, and MMFMPIAFSVMFFFFPAGLVL.

Belongs to the OXA1/ALB3/YidC family. Type 1 subfamily. As to quaternary structure, interacts with the Sec translocase complex via SecD. Specifically interacts with transmembrane segments of nascent integral membrane proteins during membrane integration.

It is found in the cell inner membrane. In terms of biological role, required for the insertion and/or proper folding and/or complex formation of integral membrane proteins into the membrane. Involved in integration of membrane proteins that insert both dependently and independently of the Sec translocase complex, as well as at least some lipoproteins. Aids folding of multispanning membrane proteins. The chain is Membrane protein insertase YidC from Burkholderia pseudomallei (strain 668).